The following is a 262-amino-acid chain: Small ribosomal subunit protein eS1 (262 aa).

This sequence belongs to the eukaryotic ribosomal protein eS1 family. As to quaternary structure, component of the small ribosomal subunit. Mature ribosomes consist of a small (40S) and a large (60S) subunit. The 40S subunit contains about 33 different proteins and 1 molecule of RNA (18S). The 60S subunit contains about 49 different proteins and 3 molecules of RNA (25S, 5.8S and 5S).

The protein resides in the cytoplasm. This Plasmodium knowlesi (strain H) protein is Small ribosomal subunit protein eS1.